The primary structure comprises 100 residues: Small ribosomal subunit protein bS18c (100 aa).

The segment covering 1–19 (MDKSKRPFRKSKRSFRRRL) has biased composition (basic residues). The tract at residues 1-23 (MDKSKRPFRKSKRSFRRRLPPIG) is disordered.

Belongs to the bacterial ribosomal protein bS18 family. In terms of assembly, part of the 30S ribosomal subunit.

It localises to the plastid. The protein resides in the chloroplast. This chain is Small ribosomal subunit protein bS18c, found in Calycanthus floridus var. glaucus (Eastern sweetshrub).